We begin with the raw amino-acid sequence, 358 residues long: Methylthioribose-1-phosphate isomerase (358 aa).

Residues Arg54–Ala56, Arg96, and Gln205 contribute to the substrate site. Asp246 functions as the Proton donor in the catalytic mechanism. Asn256–Lys257 serves as a coordination point for substrate.

It belongs to the eIF-2B alpha/beta/delta subunits family. MtnA subfamily.

It catalyses the reaction 5-(methylsulfanyl)-alpha-D-ribose 1-phosphate = 5-(methylsulfanyl)-D-ribulose 1-phosphate. It participates in amino-acid biosynthesis; L-methionine biosynthesis via salvage pathway; L-methionine from S-methyl-5-thio-alpha-D-ribose 1-phosphate: step 1/6. Functionally, catalyzes the interconversion of methylthioribose-1-phosphate (MTR-1-P) into methylthioribulose-1-phosphate (MTRu-1-P). The polypeptide is Methylthioribose-1-phosphate isomerase (Pseudomonas fluorescens (strain Pf0-1)).